The following is a 482-amino-acid chain: Isoxanthopterin deaminase (482 aa).

Residues His74 and His76 each coordinate Zn(2+). Gln79 is a substrate binding site. His246 provides a ligand contact to Zn(2+). 2 residues coordinate substrate: Glu249 and His283. The Zn(2+) site is built by His283 and Asp334.

The protein belongs to the metallo-dependent hydrolases superfamily. ATZ/TRZ family. Requires Zn(2+) as cofactor.

It catalyses the reaction a 2-amino-4-hydroxypteridine + H2O + H(+) = a 2,4-dihydroxypteridine + NH4(+). The protein is Isoxanthopterin deaminase of Unknown prokaryotic organism.